The chain runs to 526 residues: Methane monooxygenase component A alpha chain (526 aa).

Residues E114, E144, and H147 each coordinate Fe cation. C151 is a catalytic residue. Fe cation contacts are provided by E209, E243, and H246.

This sequence belongs to the TmoA/XamoA family. In terms of assembly, m.trichosporium has two forms of methane monooxygenase, a soluble and a membrane-bound type. The soluble type consists of four components (A to D): protein A, comprising three chains, in an alpha-2, beta-2, gamma-2 configuration, is a nonheme iron protein containing an unusual mu-hydroxo bridge structure at its active site and interacts with both oxygen and methane. Fe cation is required as a cofactor.

The enzyme catalyses methane + NADH + O2 + H(+) = methanol + NAD(+) + H2O. It carries out the reaction methane + NADPH + O2 + H(+) = methanol + NADP(+) + H2O. Functionally, responsible for the initial oxygenation of methane to methanol in methanotrophs. It also catalyzes the monohydroxylation of a variety of unactivated alkenes, alicyclic, aromatic and heterocyclic compounds. This chain is Methane monooxygenase component A alpha chain (mmoX), found in Methylosinus trichosporium.